A 101-amino-acid chain; its full sequence is Integration host factor subunit alpha (101 aa).

Belongs to the bacterial histone-like protein family. In terms of assembly, heterodimer of an alpha and a beta chain.

In terms of biological role, this protein is one of the two subunits of integration host factor, a specific DNA-binding protein that functions in genetic recombination as well as in transcriptional and translational control. The chain is Integration host factor subunit alpha from Saccharophagus degradans (strain 2-40 / ATCC 43961 / DSM 17024).